A 223-amino-acid polypeptide reads, in one-letter code: Sigma non-opioid intracellular receptor 1 (223 aa).

Over 1 to 9 the chain is Lumenal; sequence MQWALGRRW. Residues 2–8 form a targeting to endoplasmic reticulum-associated lipid droplets region; sequence QWALGRR. The helical transmembrane segment at 10–30 threads the bilayer; it reads VWAALLLAAAAVLTQVVWLWL. At 31–223 the chain is on the cytoplasmic side; it reads GTQSFVFQHE…FTTYLFGQDS (193 aa). The interval 99-106 is important for ligand-binding; that stretch reads SLSEYVLL. Positions 177 to 223 are C-terminal hydrophobic region; it reads VIPSTLAFALADTIFSTQDFLTLFYTLRAYARGLRLEFTTYLFGQDS.

This sequence belongs to the ERG2 family. In terms of assembly, homotrimer. Forms a ternary complex with ANK2 and ITPR3. The complex is disrupted by agonists. Interacts with KCNA4. Interacts with KCNA2; cocaine consumption leads to increased interaction. Interacts with RNF112 in an oxidative stress-regulated manner.

It is found in the nucleus inner membrane. The protein resides in the nucleus outer membrane. The protein localises to the nucleus envelope. Its subcellular location is the cytoplasmic vesicle. It localises to the endoplasmic reticulum membrane. It is found in the membrane. The protein resides in the lipid droplet. The protein localises to the cell junction. Its subcellular location is the cell membrane. It localises to the cell projection. It is found in the growth cone. The protein resides in the postsynaptic density membrane. Functionally, functions in lipid transport from the endoplasmic reticulum and is involved in a wide array of cellular functions probably through regulation of the biogenesis of lipid microdomains at the plasma membrane. Involved in the regulation of different receptors it plays a role in BDNF signaling and EGF signaling. Also regulates ion channels like the potassium channel and could modulate neurotransmitter release. Plays a role in calcium signaling through modulation together with ANK2 of the ITP3R-dependent calcium efflux at the endoplasmic reticulum. Plays a role in several other cell functions including proliferation, survival and death. Originally identified for its ability to bind various psychoactive drugs it is involved in learning processes, memory and mood alteration. Necessary for proper mitochondrial axonal transport in motor neurons, in particular the retrograde movement of mitochondria. Plays a role in protecting cells against oxidative stress-induced cell death via its interaction with RNF112. The sequence is that of Sigma non-opioid intracellular receptor 1 (SIGMAR1) from Mustela erminea (Ermine).